The sequence spans 272 residues: HMP-PP phosphatase (272 aa).

Catalysis depends on Asp-8, which acts as the Nucleophile. Mg(2+)-binding residues include Asp-8, Asp-10, and Asp-212.

The protein belongs to the HAD-like hydrolase superfamily. Cof family. It depends on Mg(2+) as a cofactor.

It catalyses the reaction 4-amino-2-methyl-5-(diphosphooxymethyl)pyrimidine + H2O = 4-amino-2-methyl-5-(phosphooxymethyl)pyrimidine + phosphate + H(+). Its function is as follows. Catalyzes the hydrolysis of 4-amino-2-methyl-5-hydroxymethylpyrimidine pyrophosphate (HMP-PP) to 4-amino-2-methyl-5-hydroxymethylpyrimidine phosphate (HMP-P). This chain is HMP-PP phosphatase, found in Escherichia fergusonii (strain ATCC 35469 / DSM 13698 / CCUG 18766 / IAM 14443 / JCM 21226 / LMG 7866 / NBRC 102419 / NCTC 12128 / CDC 0568-73).